The sequence spans 719 residues: Fatty acid oxidation complex subunit alpha (719 aa).

Residues 1-190 are enoyl-CoA hydratase/isomerase; that stretch reads MIYQGNRITV…KLGLVDAVVA (190 aa). Aspartate 298 serves as a coordination point for substrate. The segment at 313–719 is 3-hydroxyacyl-CoA dehydrogenase; that stretch reads HDINEAAVLG…AAGETFYPKA (407 aa). NAD(+) is bound by residues methionine 326, aspartate 345, 402 to 404, lysine 409, and serine 431; that span reads VVE. Residue histidine 452 is the For 3-hydroxyacyl-CoA dehydrogenase activity of the active site. Asparagine 455 is an NAD(+) binding site. Residue asparagine 502 coordinates substrate.

This sequence in the N-terminal section; belongs to the enoyl-CoA hydratase/isomerase family. It in the C-terminal section; belongs to the 3-hydroxyacyl-CoA dehydrogenase family. Heterotetramer of two alpha chains (FadB) and two beta chains (FadA).

The enzyme catalyses a (3S)-3-hydroxyacyl-CoA + NAD(+) = a 3-oxoacyl-CoA + NADH + H(+). The catalysed reaction is a (3S)-3-hydroxyacyl-CoA = a (2E)-enoyl-CoA + H2O. It carries out the reaction a 4-saturated-(3S)-3-hydroxyacyl-CoA = a (3E)-enoyl-CoA + H2O. It catalyses the reaction (3S)-3-hydroxybutanoyl-CoA = (3R)-3-hydroxybutanoyl-CoA. The enzyme catalyses a (3Z)-enoyl-CoA = a 4-saturated (2E)-enoyl-CoA. The catalysed reaction is a (3E)-enoyl-CoA = a 4-saturated (2E)-enoyl-CoA. Its pathway is lipid metabolism; fatty acid beta-oxidation. Functionally, involved in the aerobic and anaerobic degradation of long-chain fatty acids via beta-oxidation cycle. Catalyzes the formation of 3-oxoacyl-CoA from enoyl-CoA via L-3-hydroxyacyl-CoA. It can also use D-3-hydroxyacyl-CoA and cis-3-enoyl-CoA as substrate. This chain is Fatty acid oxidation complex subunit alpha, found in Psychrobacter sp. (strain PRwf-1).